The primary structure comprises 222 residues: Nudix hydrolase 11 (222 aa).

In terms of domain architecture, Nudix hydrolase spans 31-175 (AKSSAVLVCL…EGERYLLQYF (145 aa)). The short motif at 73–96 (GGKRDQEDKDDIATALREAREEIG) is the Nudix box element. The Mg(2+) site is built by Glu-90 and Glu-94. Residues 186–204 (FIIWALTAGILIRVASIVY) form a helical membrane-spanning segment.

The protein belongs to the Nudix hydrolase family. PCD1 subfamily. Mn(2+) serves as cofactor. Mg(2+) is required as a cofactor. As to expression, expressed in roots, stems and leaves.

Its subcellular location is the peroxisome membrane. Functionally, coenzyme A diphosphatase which mediates the cleavage of CoA into 3',5'-ADP from CoA and 4'-phosphopantetheine. Can use malonyl-CoA, hexanoyl-CoA, lauroyl-CoA, myristoyl-CoA and palmitoyl-CoA as substrates, but not isobutyryl-CoA or propionyl-CoA. This Arabidopsis thaliana (Mouse-ear cress) protein is Nudix hydrolase 11 (NUDT11).